A 226-amino-acid polypeptide reads, in one-letter code: LexA repressor (226 aa).

Positions 42–62 (MREIGDAVGLASLSSVTHQLN) form a DNA-binding region, H-T-H motif. Residues Ser-150 and Lys-187 each act as for autocatalytic cleavage activity in the active site.

Belongs to the peptidase S24 family. As to quaternary structure, homodimer.

It catalyses the reaction Hydrolysis of Ala-|-Gly bond in repressor LexA.. Represses a number of genes involved in the response to DNA damage (SOS response), including recA and lexA. In the presence of single-stranded DNA, RecA interacts with LexA causing an autocatalytic cleavage which disrupts the DNA-binding part of LexA, leading to derepression of the SOS regulon and eventually DNA repair. The chain is LexA repressor from Clavibacter sepedonicus (Clavibacter michiganensis subsp. sepedonicus).